The chain runs to 410 residues: WD repeat and FYVE domain-containing protein 1 (410 aa).

WD repeat units lie at residues 22-61 (GHQD…QYWP), 66-105 (TMAS…NKMN), 112-150 (AHQN…NMLG), 153-192 (FFSS…CSVI), 197-236 (GHEG…GRTL), and 240-279 (GHHD…EEAP). The FYVE-type zinc-finger motif lies at 281-352 (WLESDSCQKC…VCDSCYDSIK (72 aa)). Cysteine 287, cysteine 290, cysteine 314, cysteine 317, cysteine 322, cysteine 325, cysteine 344, and cysteine 347 together coordinate Zn(2+). One copy of the WD 7 repeat lies at 364–403 (EGKHNISHMSMDVARGLMVTCGTDRVVKIWDMTPVVGCSL). At serine 408 the chain carries Phosphoserine.

As to quaternary structure, binds PtdIns3P in vitro with high specificity over other phosphoinositides. Interacts (via WD repeat 2) with tyrosine-phosphorylated TLR3 (via TIR domain) in response to poly(I:C). Interacts with TLR4 in response to LPS. Interacts with TICAM1 in response to poly(I:C).

It localises to the early endosome. In terms of biological role, positively regulates TLR3- and TLR4-mediated signaling pathways by bridging the interaction between TLR3 or TLR4 and TICAM1. Promotes TLR3/4 ligand-induced activation of transcription factors IRF3 and NF-kappa-B, as well as the production of IFN-beta and inflammatory cytokines. The chain is WD repeat and FYVE domain-containing protein 1 (WDFY1) from Bos taurus (Bovine).